A 530-amino-acid chain; its full sequence is MEEIKYIEPAALHDEMLRLRNEKQMDFLESLTGMDWGVADEGDAPNVTRGLGVVYHLESTVTGERIAIKTSTNNRETPEIPSVSDIWKAADFNEREVFDYYGIVFIGHPDMRRLYLRNDWVGHPMRKDNNPEKDNPLRMDNEETYDTTREIELNPDGTYQTQENVIFDDREYVVNIGPQHPATHGVMRFRVSLEGETIKKLDANCGYIHRGIEKMNESLTYPQTLALTDRLDYLGAHQNRHALCMCIEKAMGIEVSERVKYIRTIMDELQRIDSHLLFYSCLAMDLGALTAFFYGFRDREMILDMFEETCGGRLIMNYNTIGGVQADLHPNFIPRVKKFIPYLRGIIHEYHDVFTGNVIARQRLKGVGVLSREDAISFGCTGGTGRASGWACDVRKRMPYGVYDKVDFKEIVYTEGDSFARYMVRMDEIMESLNIIEQLIDNIPEGPIQEKMKPIIRVPEGSYYTAVEGSRGEFGVFLESHGDKTPYRLHYRSTGLPLVSAVDTICRGAKIADLIAIGGTLDYVVPDIDR.

Residues 1-144 (MEEIKYIEPA…NPLRMDNEET (144 aa)) are NADH dehydrogenase I subunit C. The tract at residues 171–530 (EYVVNIGPQH…LDYVVPDIDR (360 aa)) is NADH dehydrogenase I subunit D.

The protein in the N-terminal section; belongs to the complex I 30 kDa subunit family. It in the C-terminal section; belongs to the complex I 49 kDa subunit family. In terms of assembly, NDH-1 is composed of 13 different subunits. Subunits NuoB, CD, E, F, and G constitute the peripheral sector of the complex.

The protein localises to the cell inner membrane. The catalysed reaction is a quinone + NADH + 5 H(+)(in) = a quinol + NAD(+) + 4 H(+)(out). Its function is as follows. NDH-1 shuttles electrons from NADH, via FMN and iron-sulfur (Fe-S) centers, to quinones in the respiratory chain. The immediate electron acceptor for the enzyme in this species is believed to be a menaquinone. Couples the redox reaction to proton translocation (for every two electrons transferred, four hydrogen ions are translocated across the cytoplasmic membrane), and thus conserves the redox energy in a proton gradient. The chain is NADH-quinone oxidoreductase subunit C/D from Bacteroides fragilis (strain ATCC 25285 / DSM 2151 / CCUG 4856 / JCM 11019 / LMG 10263 / NCTC 9343 / Onslow / VPI 2553 / EN-2).